The primary structure comprises 155 residues: Ribosomal RNA large subunit methyltransferase H (155 aa).

S-adenosyl-L-methionine-binding positions include Leu72, Gly103, and 122–127 (LSDLTL).

The protein belongs to the RNA methyltransferase RlmH family. In terms of assembly, homodimer.

It is found in the cytoplasm. It catalyses the reaction pseudouridine(1915) in 23S rRNA + S-adenosyl-L-methionine = N(3)-methylpseudouridine(1915) in 23S rRNA + S-adenosyl-L-homocysteine + H(+). In terms of biological role, specifically methylates the pseudouridine at position 1915 (m3Psi1915) in 23S rRNA. The sequence is that of Ribosomal RNA large subunit methyltransferase H from Albidiferax ferrireducens (strain ATCC BAA-621 / DSM 15236 / T118) (Rhodoferax ferrireducens).